The following is a 294-amino-acid chain: Nucleotide-binding protein NT01CX_1284 (294 aa).

An ATP-binding site is contributed by 8–15; it reads GLSGAGKS. GTP is bound at residue 59 to 62; the sequence is DIRG.

The protein belongs to the RapZ-like family.

Functionally, displays ATPase and GTPase activities. This is Nucleotide-binding protein NT01CX_1284 from Clostridium novyi (strain NT).